We begin with the raw amino-acid sequence, 707 residues long: Leucine-rich repeat neuronal protein 3 (707 aa).

The N-terminal stretch at 1–22 (MKDAPLQIHVLLGLAITALVQA) is a signal peptide. The LRRNT domain maps to 23–69 (GDKKVDCPQLCTCEIRPWFTPRSIYMEASTVDCNDLGLLNFPARLPA). Topologically, residues 23–626 (GDKKVDCPQL…DGKENGKSHT (604 aa)) are extracellular. LRR repeat units lie at residues 70 to 91 (DTQILLLQTNNIARIEHSTDFP), 93 to 114 (NLTGLDLSQNNLSSVTNINVQK), 117 to 138 (QLLSVYLEENKLTELPEKCLYG), 141 to 162 (NLQELYVNHNLLSAISPGAFVG), 165 to 186 (NLLRLHLNSNRLQMINSKWFEA), 189 to 210 (NLEILMLGDNPILRIKDMNFQP), 213 to 234 (KLRSLVIAGINLTEVPDDALVG), 237 to 258 (NLESISFYDNRLNKVPQVALQK), 261 to 282 (NLKFLDLNKNPINRIRRGDFSN), 285 to 304 (HLKELGINNMPELVSIDSLA), 310 to 332 (DLRKIEATNNPRLSYIHPNAFFR), and 335 to 358 (KLESLMLNSNALSALYHGTIESLP). N93 and N103 each carry an N-linked (GlcNAc...) asparagine glycan. An N-linked (GlcNAc...) asparagine glycan is attached at N223. In terms of domain architecture, LRRCT spans 368-421 (NPIRCDCVIRWINMNKTNIRFMEPDSLFCVDPPEFQGQNVRQVHFRDMMEICLP). A glycan (N-linked (GlcNAc...) asparagine) is linked at N382. One can recognise an Ig-like C2-type domain in the interval 421–514 (PLIAPESFPS…DLKSIMIKVG (94 aa)). The cysteines at positions 444 and 496 are disulfide-linked. Residues N522, N579, and N608 are each glycosylated (N-linked (GlcNAc...) asparagine). One can recognise a Fibronectin type-III domain in the interval 523–614 (GSLNIKIRDI…QCVNVTTKSL (92 aa)). The helical transmembrane segment at 627 to 647 (VFVACVGGLLGIIGVMCLFGC) threads the bilayer. The Cytoplasmic segment spans residues 648 to 707 (VSQEGNCENEHSYTVNHCHKPTLAFSELYPPLINLWESSKEKPASLEVKATAIGVPTSMS).

It is found in the membrane. This chain is Leucine-rich repeat neuronal protein 3 (Lrrn3), found in Rattus norvegicus (Rat).